The primary structure comprises 47 residues: Lysis protein for colicins E2 and E3 (47 aa).

The first 19 residues, 1–19 (MKKITGIILLLLAVIILSA), serve as a signal peptide directing secretion. Residue cysteine 20 is the site of N-palmitoyl cysteine attachment. Cysteine 20 carries S-diacylglycerol cysteine lipidation.

The protein resides in the cell outer membrane. In terms of biological role, lysis proteins are required for both colicin release and partial cell lysis. The polypeptide is Lysis protein for colicins E2 and E3 (hic) (Escherichia coli).